Consider the following 165-residue polypeptide: Phosphopantetheine adenylyltransferase (165 aa).

Thr10 provides a ligand contact to substrate. ATP contacts are provided by residues 10–11 (TF) and His18. Residues Lys42, Leu75, and Arg89 each coordinate substrate. ATP-binding positions include 90-92 (GVR), Glu100, and 125-131 (VSFISSS).

The protein belongs to the bacterial CoaD family. In terms of assembly, homohexamer. The cofactor is Mg(2+).

It localises to the cytoplasm. The catalysed reaction is (R)-4'-phosphopantetheine + ATP + H(+) = 3'-dephospho-CoA + diphosphate. It participates in cofactor biosynthesis; coenzyme A biosynthesis; CoA from (R)-pantothenate: step 4/5. Its function is as follows. Reversibly transfers an adenylyl group from ATP to 4'-phosphopantetheine, yielding dephospho-CoA (dPCoA) and pyrophosphate. This Buchnera aphidicola subsp. Acyrthosiphon pisum (strain 5A) protein is Phosphopantetheine adenylyltransferase.